The primary structure comprises 359 residues: 4-hydroxy-3-methylbut-2-en-1-yl diphosphate synthase (flavodoxin) (359 aa).

[4Fe-4S] cluster is bound by residues C264, C267, C299, and E306.

The protein belongs to the IspG family. [4Fe-4S] cluster is required as a cofactor.

It carries out the reaction (2E)-4-hydroxy-3-methylbut-2-enyl diphosphate + oxidized [flavodoxin] + H2O + 2 H(+) = 2-C-methyl-D-erythritol 2,4-cyclic diphosphate + reduced [flavodoxin]. It participates in isoprenoid biosynthesis; isopentenyl diphosphate biosynthesis via DXP pathway; isopentenyl diphosphate from 1-deoxy-D-xylulose 5-phosphate: step 5/6. In terms of biological role, converts 2C-methyl-D-erythritol 2,4-cyclodiphosphate (ME-2,4cPP) into 1-hydroxy-2-methyl-2-(E)-butenyl 4-diphosphate. In Helicobacter pylori (strain HPAG1), this protein is 4-hydroxy-3-methylbut-2-en-1-yl diphosphate synthase (flavodoxin).